The primary structure comprises 314 residues: Thymidylate synthase (314 aa).

Residues Arg32 and 176–177 (RR) each bind dUMP. Residue Cys196 is the Nucleophile of the active site. DUMP is bound by residues 216-219 (RSCD), Asn227, and 257-259 (HLY). (6R)-5,10-methylene-5,6,7,8-tetrahydrofolate is bound at residue Asp219. Ala313 is a (6R)-5,10-methylene-5,6,7,8-tetrahydrofolate binding site.

This sequence belongs to the thymidylate synthase family. Bacterial-type ThyA subfamily. Homodimer.

The protein resides in the cytoplasm. The catalysed reaction is dUMP + (6R)-5,10-methylene-5,6,7,8-tetrahydrofolate = 7,8-dihydrofolate + dTMP. It functions in the pathway pyrimidine metabolism; dTTP biosynthesis. Functionally, catalyzes the reductive methylation of 2'-deoxyuridine-5'-monophosphate (dUMP) to 2'-deoxythymidine-5'-monophosphate (dTMP) while utilizing 5,10-methylenetetrahydrofolate (mTHF) as the methyl donor and reductant in the reaction, yielding dihydrofolate (DHF) as a by-product. This enzymatic reaction provides an intracellular de novo source of dTMP, an essential precursor for DNA biosynthesis. The chain is Thymidylate synthase from Novosphingobium aromaticivorans (strain ATCC 700278 / DSM 12444 / CCUG 56034 / CIP 105152 / NBRC 16084 / F199).